Reading from the N-terminus, the 281-residue chain is NADPH-dependent 7-cyano-7-deazaguanine reductase (281 aa).

87 to 89 (IES) contributes to the substrate binding site. 89 to 90 (SK) contributes to the NADPH binding site. Catalysis depends on C188, which acts as the Thioimide intermediate. D195 serves as the catalytic Proton donor. 227–228 (HE) provides a ligand contact to substrate. Position 256–257 (256–257 (RG)) interacts with NADPH. The disordered stretch occupies residues 261–281 (INPYRSTEQAKPDHNHRMARQ). The segment covering 268-281 (EQAKPDHNHRMARQ) has biased composition (basic and acidic residues).

This sequence belongs to the GTP cyclohydrolase I family. QueF type 2 subfamily. As to quaternary structure, homodimer.

It is found in the cytoplasm. It catalyses the reaction 7-aminomethyl-7-carbaguanine + 2 NADP(+) = 7-cyano-7-deazaguanine + 2 NADPH + 3 H(+). The protein operates within tRNA modification; tRNA-queuosine biosynthesis. Its function is as follows. Catalyzes the NADPH-dependent reduction of 7-cyano-7-deazaguanine (preQ0) to 7-aminomethyl-7-deazaguanine (preQ1). The polypeptide is NADPH-dependent 7-cyano-7-deazaguanine reductase (Vibrio vulnificus (strain CMCP6)).